We begin with the raw amino-acid sequence, 61 residues long: Small ribosomal subunit protein uS14 (61 aa).

Zn(2+) is bound by residues cysteine 24, cysteine 27, cysteine 40, and cysteine 43.

The protein belongs to the universal ribosomal protein uS14 family. Zinc-binding uS14 subfamily. In terms of assembly, part of the 30S ribosomal subunit. Contacts proteins S3 and S10. Zn(2+) serves as cofactor.

Binds 16S rRNA, required for the assembly of 30S particles and may also be responsible for determining the conformation of the 16S rRNA at the A site. This chain is Small ribosomal subunit protein uS14, found in Syntrophobacter fumaroxidans (strain DSM 10017 / MPOB).